The chain runs to 89 residues: Small ribosomal subunit protein bS20 (89 aa).

Belongs to the bacterial ribosomal protein bS20 family.

In terms of biological role, binds directly to 16S ribosomal RNA. The polypeptide is Small ribosomal subunit protein bS20 (Syntrophus aciditrophicus (strain SB)).